We begin with the raw amino-acid sequence, 431 residues long: Fibrinogen C domain-containing protein 1 (431 aa).

The Cytoplasmic portion of the chain corresponds to M1 to C3. A helical; Signal-anchor for type II membrane protein transmembrane segment spans residues T4–L24. The Extracellular portion of the chain corresponds to N25–R431. Positions C205–R428 constitute a Fibrinogen C-terminal domain. An intrachain disulfide couples C214 to C243. N-linked (GlcNAc...) asparagine glycosylation occurs at N310. 2 residues coordinate Ca(2+): D363 and D365. C371 and C384 form a disulfide bridge.

In terms of assembly, homotetramer; disulfide-linked.

Its subcellular location is the membrane. Its function is as follows. Acetyl group-binding receptor which shows a high-affinity and calcium-dependent binding to acetylated structures such as chitin, some N-acetylated carbohydrates, and amino acids, but not to their non-acetylated counterparts. Can facilitate the endocytosis of acetylated components. The polypeptide is Fibrinogen C domain-containing protein 1 (FIBCD1) (Macaca fascicularis (Crab-eating macaque)).